We begin with the raw amino-acid sequence, 155 residues long: MYKIQLLSCIALTLALVANGAPTSSSTGNTMKEVKSLLLDLQLLLEKVKNPENLKLSRMHTFNFYVPKVNATELKHLKCLLEELKLLEEVLNLAPSKNLNPREIKDSMDNIKRIVLELQGSETGFTCEYDDATVKAVEFLNKWITFCQSIYSTMT.

The first 20 residues, M1–G20, serve as a signal peptide directing secretion. A glycan (O-linked (GalNAc...) threonine) is linked at T23. C79 and C127 are oxidised to a cystine.

It belongs to the IL-2 family.

The protein localises to the secreted. Its function is as follows. Cytokine produced by activated CD4-positive helper T-cells and to a lesser extend activated CD8-positive T-cells and natural killer (NK) cells that plays pivotal roles in the immune response and tolerance. Binds to a receptor complex composed of either the high-affinity trimeric IL-2R (IL2RA/CD25, IL2RB/CD122 and IL2RG/CD132) or the low-affinity dimeric IL-2R (IL2RB and IL2RG). Interaction with the receptor leads to oligomerization and conformation changes in the IL-2R subunits resulting in downstream signaling starting with phosphorylation of JAK1 and JAK3. In turn, JAK1 and JAK3 phosphorylate the receptor to form a docking site leading to the phosphorylation of several substrates including STAT5. This process leads to activation of several pathways including STAT, phosphoinositide-3-kinase/PI3K and mitogen-activated protein kinase/MAPK pathways. Functions as a T-cell growth factor and can increase NK-cell cytolytic activity as well. Promotes strong proliferation of activated B-cells and subsequently immunoglobulin production. Plays a pivotal role in regulating the adaptive immune system by controlling the survival and proliferation of regulatory T-cells, which are required for the maintenance of immune tolerance. Moreover, participates in the differentiation and homeostasis of effector T-cell subsets, including Th1, Th2, Th17 as well as memory CD8-positive T-cells. The chain is Interleukin-2 (IL2) from Bubalus bubalis (Domestic water buffalo).